A 525-amino-acid chain; its full sequence is Ubiquitin carboxyl-terminal hydrolase 22 (525 aa).

The UBP-type zinc finger occupies 21–138 (PGCSHLGSFK…KEEQRKAWKM (118 aa)). Zn(2+)-binding residues include Cys-23, His-25, Cys-63, Cys-66, Cys-76, Cys-79, Cys-84, His-89, His-93, His-99, Cys-112, and Cys-115. N6-acetyllysine is present on Lys-129. Phosphothreonine is present on Thr-147. Residues 176-520 (RGLINLGNTC…EGYLLFYHKQ (345 aa)) form the USP domain. The active-site Nucleophile is the Cys-185. Ser-237 carries the post-translational modification Phosphoserine. His-479 (proton acceptor) is an active-site residue.

It belongs to the peptidase C19 family. UBP8 subfamily. Component of some SAGA transcription coactivator-HAT complexes, at least composed of ATXN7, ATXN7L3, ENY2, GCN5L2, SUPT3H, TAF10, TRRAP and USP22. Within the SAGA complex, ATXN7L3, ENY2 and USP22 form a subcomplex required for histone deubiquitination. Interacts directly with ATXN7L3; leading to its recruitment to the SAGA complex. Interacts with ATXN7L3 and weakly with ATXN7L3B. Interacts with MED1. In terms of processing, phosphorylated in G2/M phase, but not in G1 phase by CDK1. Ubiquitinated and subsequently degraded in a CDC20-dependent manner. Highly expressed in brain and weakly in other organs.

The protein localises to the nucleus. It localises to the cytoplasm. The catalysed reaction is Thiol-dependent hydrolysis of ester, thioester, amide, peptide and isopeptide bonds formed by the C-terminal Gly of ubiquitin (a 76-residue protein attached to proteins as an intracellular targeting signal).. In terms of biological role, deubiquitinase that plays a role in several cellular processes including transcriptional regulation, cell cycle progression or innate immunity. As part of the transcription regulatory histone acetylation (HAT) complex SAGA, catalyzes the deubiquitination of both histones H2A and H2B, thereby acting as a transcriptional coactivator. Recruited to specific gene promoters by activators such as MYC, where it is required for transcription. Facilitates cell-cycle progression by stabilizing CCNB1 and antagonizing its proteasome-mediated degradation in a cell cycle-specific manner. Modulates cell cycle progression and apoptosis also by antagonizing TP53 transcriptional activation through deacetylase SIRT1 stabilization. Plays multiple roles in immunity and inflammation. Participates in antiviral response by deubiquitinating the importin KPNA2, leading to IRF3 nuclear translocation and subsequent type I interferon production. Acts as a central regulator of type III IFN signaling by negatively regulating STING1 activation and ubiquitination. Inhibits NLRP3 inflammasome activation by promoting NLRP3 degradation through ATG5-dependent autophagy. Deubiquitinates CD274 to induce its stabilization and thereby participates in maintenance of immune tolerance to self. Controls necroptotic cell death by regulating RIPK3 phosphorylation and ubiquitination. During bacterial infection, promotes pro-inflammatory response by targeting TRAF6 and removing its 'Lys-48'-linked polyubiquitination. The sequence is that of Ubiquitin carboxyl-terminal hydrolase 22 (Usp22) from Mus musculus (Mouse).